The sequence spans 218 residues: MPLPDTMFCAQQIHIPPELPDILKQFTKAAIRTQPADVLQWSAGYFSALSRGDPLPVKDRIEMPVATQKTDTGLTQGLLKVLHKQCSHKQYVELADLEKKWKNLCLPVEKLRTILELDPCEDKIEWIKFLALGCSSLGRTLNTAMKNVCEILTSDPEGGPARIPFETFAYVYQYLSGLDPELPAVETENYLTSLRLMSESRKNGMIGLSDFFVGKKII.

One can recognise an RIIa domain in the interval 17 to 54; it reads PELPDILKQFTKAAIRTQPADVLQWSAGYFSALSRGDP.

It belongs to the ropporin family. In terms of assembly, component of the axonemal radial spoke complex 1 (RS1), at least composed of spoke head proteins RSPH1, RSPH3, RSPH9 and the cilia-specific component RSPH4A or sperm-specific component RSPH6A, spoke stalk proteins RSPH14, DNAJB13, DYDC1, ROPN1L and NME5, and the anchor protein IQUB. May interact with AKAP3. Interacts with FSCB; the interaction increases upon spermatozoa capacitation conditions. Interacts with CFAP61. In terms of processing, sumoylated, sumoylation decreases upon spermatozoa capacitation conditions. Testis-specific. Expression is restricted to germ cells.

It is found in the cell projection. Its subcellular location is the cilium. The protein resides in the flagellum. Its function is as follows. Functions as part of axonemal radial spoke complexes that play an important part in the motility of sperm and cilia. Important for male fertility. With ROPN1, involved in fibrous sheath integrity and sperm motility, plays a role in PKA-dependent signaling processes required for spermatozoa capacitation. This chain is Ropporin-1-like protein (Ropn1l), found in Mus musculus (Mouse).